A 216-amino-acid chain; its full sequence is UDP-N-acetylglucosamine transferase subunit ALG14 (216 aa).

Residues 1–3 (MVC) lie on the Lumenal side of the membrane. Residues 4 to 24 (VLVLAAAAGAVAVFLILRIWV) form a helical membrane-spanning segment. Residues 25–216 (VLRSMDVTPR…PKSVYLGRIV (192 aa)) are Cytoplasmic-facing.

This sequence belongs to the ALG14 family. Forms with ALG13 the active heterodimeric UDP-N-acetylglucosamine transferase complex.

The protein localises to the endoplasmic reticulum membrane. In terms of biological role, part of the UDP-N-acetylglucosamine transferase complex that operates in the biosynthetic pathway of dolichol-linked oligosaccharides, the glycan precursors employed in protein asparagine (N)-glycosylation. The assembly of dolichol-linked oligosaccharides begins on the cytosolic side of the endoplasmic reticulum membrane and finishes in its lumen. The sequential addition of sugars to dolichol pyrophosphate produces dolichol-linked oligosaccharides containing fourteen sugars, including two GlcNAcs, nine mannoses and three glucoses. Once assembled, the oligosaccharides are transferred from the lipid to nascent proteins by oligosaccharyltransferases. Functions as a protein-membrane adapter recruiting ALG13 at the cytoplasmic face of the endoplasmic reticulum, where the complex catalyzes the second step of dolichol pyrophosphate biosynthesis, transferring a beta1,4-linked N-acetylglucosamine (GlcNAc) from UDP-GlcNAc to GlcNAc-pyrophosphatedolichol (Gn-PDol) to produce N,N'-diacetylchitobiosyl diphosphodolichol. N,N'-diacetylchitobiosyl diphosphodolichol is a substrate for ALG1, the following enzyme in the biosynthetic pathway. This is UDP-N-acetylglucosamine transferase subunit ALG14 from Homo sapiens (Human).